The primary structure comprises 217 residues: Serine acetyltransferase (217 aa).

Belongs to the transferase hexapeptide repeat family.

The protein resides in the cytoplasm. The enzyme catalyses L-serine + acetyl-CoA = O-acetyl-L-serine + CoA. Its pathway is amino-acid biosynthesis; L-cysteine biosynthesis; L-cysteine from L-serine: step 1/2. With respect to regulation, inhibited by cysteine. Catalyzes the acetylation of serine by acetyl-CoA to produce O-acetylserine (OAS). The chain is Serine acetyltransferase from Bacillus pumilus (strain SAFR-032).